A 570-amino-acid chain; its full sequence is Peptidyl-prolyl cis-trans isomerase-like 2 (570 aa).

The U-box domain maps to 37–110 (KRLPFNFCSL…GDYVDPVTYK (74 aa)). Disordered stretches follow at residues 215–253 (RSERAQRADSSAVTKKADGSTTTSTQSKTASFQSGKPTP), 428–449 (STTLNNLETHPVNSSTNRPTPD), and 469–570 (KKAE…SSWD). The span at 234-248 (STTTSTQSKTASFQS) shows a compositional bias: low complexity. Residues 298–457 (QKGYARISTT…PDIRITDVTI (160 aa)) form the PPIase cyclophilin-type domain. The segment covering 428–446 (STTLNNLETHPVNSSTNRP) has biased composition (polar residues). Over residues 469–483 (KKAEEASGKNKKVDP) the composition is skewed to basic and acidic residues. Acidic residues-rich tracts occupy residues 484–497 (TEEDRETQQEDDDQ) and 535–550 (QEEDEIVEFVDEEPEP).

Belongs to the cyclophilin-type PPIase family. PPIL2 subfamily.

It is found in the nucleus. The enzyme catalyses [protein]-peptidylproline (omega=180) = [protein]-peptidylproline (omega=0). The catalysed reaction is S-ubiquitinyl-[E2 ubiquitin-conjugating enzyme]-L-cysteine + [acceptor protein]-L-lysine = [E2 ubiquitin-conjugating enzyme]-L-cysteine + N(6)-ubiquitinyl-[acceptor protein]-L-lysine.. Its function is as follows. May catalyze the cis-trans isomerization of proline imidic peptide bonds in oligopeptides thereby assisting the folding of proteins. May also function as a chaperone, playing a role in intracellular transport of proteins. May also have a protein ubiquitin ligase activity acting as an E3 ubiquitin protein ligase or as a ubiquitin-ubiquitin ligase promoting elongation of ubiquitin chains on proteins. This is Peptidyl-prolyl cis-trans isomerase-like 2 (cyp8) from Aspergillus oryzae (strain ATCC 42149 / RIB 40) (Yellow koji mold).